The sequence spans 353 residues: Mitochondrial import inner membrane translocase subunit TIM50 (353 aa).

Residues 1–44 constitute a mitochondrion transit peptide; that stretch reads MAASAAVFSRLRSGLRLGSRGLCTRLATPPRRAPDQAAEIGSRG. A disordered region spans residues 25–60; it reads RLATPPRRAPDQAAEIGSRGSTKAQGPQQQPGSEGP. The residue at position 45 (Ser45) is a Phosphoserine. At 45–65 the chain is on the mitochondrial matrix side; sequence STKAQGPQQQPGSEGPSYAKK. Residues 49 to 60 are compositionally biased toward low complexity; that stretch reads QGPQQQPGSEGP. A helical membrane pass occupies residues 66–86; it reads VALWLAGLLGAGGTVSVVYIF. The Mitochondrial intermembrane segment spans residues 87 to 353; sequence GNNPVDENGA…SRLWPRSKQP (267 aa). The 144-residue stretch at 143–286 folds into the FCP1 homology domain; sequence YYQPPYTLVL…LDLSAFLKTI (144 aa). Position 341 is a phosphoserine (Ser341).

This sequence belongs to the TIM50 family. Component of the TIM23 complex at least composed of TIMM23, TIMM17 (TIMM17A or TIMM17B) and TIMM50; within this complex, directly interacts with TIMM23. The complex interacts with the TIMM44 component of the PAM complex and with DNAJC15. As to quaternary structure, interacts with COIL and snRNPs. As to expression, widely expressed. Expressed at higher level in brain, kidney and liver (at protein level).

Its subcellular location is the mitochondrion inner membrane. It is found in the nucleus speckle. Essential component of the TIM23 complex, a complex that mediates the translocation of transit peptide-containing proteins across the mitochondrial inner membrane. Has some phosphatase activity in vitro; however such activity may not be relevant in vivo. Its function is as follows. May participate in the release of snRNPs and SMN from the Cajal body. The protein is Mitochondrial import inner membrane translocase subunit TIM50 (TIMM50) of Homo sapiens (Human).